Reading from the N-terminus, the 759-residue chain is Secretin XpsD (759 aa).

Residues 1 to 21 (MSERMTPRLFPVSLLIGLLAG) form the signal peptide. C22 is lipidated: N-palmitoyl cysteine. The S-diacylglycerol cysteine moiety is linked to residue C22. The span at 40 to 51 (VGAAGATQTTAE) shows a compositional bias: low complexity. Residues 40–69 (VGAAGATQTTAEQRADGNASAKPTPVIRRG) are disordered. The N0 stretch occupies residues 92 to 187 (GSATFNFEGE…APSTASPSAA (96 aa)). An N1 region spans residues 189 to 253 (GFEVRVVPLK…VQIFDVDWLS (65 aa)). The segment at 254–323 (GMSVGVFPIQ…IQQWLDRIDS (70 aa)) is N2. Positions 326–474 (GGVRLFSYEL…SIRDVIEKLD (149 aa)) are N3. Residues 352–434 (GGRGNGGNSG…PPSTNQNGSV (83 aa)) form a disordered region. The segment covering 392–401 (ATGGDIGGTS) has biased composition (gly residues). Polar residues predominate over residues 425–434 (PPSTNQNGSV). Residues 479-734 (QVHIEAQIAE…VLITPSIVRN (256 aa)) are secretin. A s domain region spans residues 736–759 (QDARDLTDEYGSKFKSMRPMDVHK).

Belongs to the bacterial secretin family. GSP D subfamily. As to quaternary structure, forms a cylindrical channel with 15 subunits. Binds to XpsN.

Its subcellular location is the cell outer membrane. Functionally, involved in a type II secretion system (T2SS, formerly general secretion pathway, GSP) for the export of proteins. This subunit forms the outer membrane channel. The polypeptide is Secretin XpsD (xpsD) (Xanthomonas campestris pv. campestris (strain ATCC 33913 / DSM 3586 / NCPPB 528 / LMG 568 / P 25)).